The sequence spans 66 residues: MFKEYKIYKFFEQVKQETYKVVWPTRKELVASTLVVVVAVFIFSLTCLVLDYSIHNIMQLLLNIGK.

The chain crosses the membrane as a helical span at residues 29–49 (LVASTLVVVVAVFIFSLTCLV).

Belongs to the SecE/SEC61-gamma family. As to quaternary structure, component of the Sec protein translocase complex. Heterotrimer consisting of SecY, SecE and SecG subunits. The heterotrimers can form oligomers, although 1 heterotrimer is thought to be able to translocate proteins. Interacts with the ribosome. Interacts with SecDF, and other proteins may be involved. Interacts with SecA.

Its subcellular location is the cell inner membrane. Its function is as follows. Essential subunit of the Sec protein translocation channel SecYEG. Clamps together the 2 halves of SecY. May contact the channel plug during translocation. This chain is Protein translocase subunit SecE, found in Rickettsia rickettsii.